A 352-amino-acid polypeptide reads, in one-letter code: MALTVDVAGPAPWGFRITGGRDFHTPIMVTKVAERGKAKDADLRPGDIIVAINGESAEGMLHAEAQSKIRQSPSPLRLQLDRSQAASPGQTNGDSSLEVLATRFQGSVRTHTESHSSLRSSYSSPTSLSPRAGSPFSPPPFSSPLAGEAAISRSFQSLACSPGLPAADRLSYSGRPGSQQAGLGRAGDSAVLVLPPSPGPRSSRPSVDSEGGSLLLDEDSEVFKMLQENREGRAAPRQSSSFRLLQEALEAEERGGTPAFLPSSLSPQSSLPASRALATPPKLHTCEKCSTSIANQAVRIQEGRYRHPGCYTCADCGLNLKMRGHFWVGDELYCEKHARQRYSAPATLSSRA.

The PDZ domain maps to 1 to 84 (MALTVDVAGP…PLRLQLDRSQ (84 aa)). 2 disordered regions span residues 69–95 (IRQS…NGDS) and 108–141 (VRTH…PPPF). The span at 81 to 95 (DRSQAASPGQTNGDS) shows a compositional bias: polar residues. Low complexity predominate over residues 117-135 (SLRSSYSSPTSLSPRAGSP). The residue at position 124 (Ser-124) is a Phosphoserine. Thr-126 is modified (phosphothreonine). Phosphoserine is present on residues Ser-127, Ser-129, Ser-134, Ser-137, Ser-143, Ser-161, Ser-197, Ser-203, Ser-213, and Ser-266. Disordered regions lie at residues 170 to 214 (LSYS…GGSL) and 253 to 275 (ERGG…PASR). Residues 258–275 (PAFLPSSLSPQSSLPASR) are compositionally biased toward low complexity. Positions 284–344 (HTCEKCSTSI…EKHARQRYSA (61 aa)) constitute an LIM zinc-binding domain.

Interacts with alpha-actinins ACTN1 and ACTN4, FLNA and MYH9. Interacts (via LIM zinc-binding domain) with MKRN2.

The protein resides in the cytoplasm. It localises to the cytoskeleton. Functionally, probable adapter protein located at the actin cytoskeleton that promotes cell attachment. Necessary for the migratory capacity of epithelial cells. Overexpression enhances cell adhesion to collagen and fibronectin and suppresses anchorage independent growth. May contribute to tumor cell migratory capacity. The sequence is that of PDZ and LIM domain protein 2 (PDLIM2) from Macaca fascicularis (Crab-eating macaque).